The chain runs to 56 residues: AAKKRPWKCCDQAVCTRSIPPICRCMDQVFECPSTCKACGPSVGDPSRRVCQDQYV.

4 cysteine pairs are disulfide-bonded: Cys10–Cys25, Cys15–Cys23, Cys32–Cys39, and Cys36–Cys51.

It belongs to the Bowman-Birk serine protease inhibitor family.

In Triticum aestivum (Wheat), this protein is Bowman-Birk type proteinase inhibitor I-2B.